The following is a 125-amino-acid chain: MPTFNQLIRHGREEKRRTDRTRALDKCPQKLGACLRVSTRTPKKPNSALRKIAKVRLSNRHDIFAYIPGEGHNLQEHSQVLIRGGRVKDLPGVKFHCIRGVKDLMGIPGRRRGRSKYGAEKPKSI.

Belongs to the universal ribosomal protein uS12 family.

The protein localises to the mitochondrion. Functionally, protein S12 is involved in the translation initiation step. This Brassica napus (Rape) protein is Small ribosomal subunit protein uS12m (RPS12).